A 485-amino-acid polypeptide reads, in one-letter code: Glutamyl-tRNA(Gln) amidotransferase subunit A (485 aa).

Catalysis depends on charge relay system residues K79 and S154. Catalysis depends on S178, which acts as the Acyl-ester intermediate.

Belongs to the amidase family. GatA subfamily. In terms of assembly, heterotrimer of A, B and C subunits.

It carries out the reaction L-glutamyl-tRNA(Gln) + L-glutamine + ATP + H2O = L-glutaminyl-tRNA(Gln) + L-glutamate + ADP + phosphate + H(+). Allows the formation of correctly charged Gln-tRNA(Gln) through the transamidation of misacylated Glu-tRNA(Gln) in organisms which lack glutaminyl-tRNA synthetase. The reaction takes place in the presence of glutamine and ATP through an activated gamma-phospho-Glu-tRNA(Gln). This chain is Glutamyl-tRNA(Gln) amidotransferase subunit A, found in Geobacillus stearothermophilus (Bacillus stearothermophilus).